The primary structure comprises 841 residues: MLGILNKVFDPTKRTISKYEKKANEIEALAQDFEKLSDEALRNKTIEFKEKLEKGQSVDDLLVEAFATVREASRRVTGMFPFKVQLMGGIALHEGNISEMKTGEGKTLTSTMPVYLNALSGKGVHIVTVNEYLASRDAEEMGKIFEFLGLTVGLNLNSLDKDEKREAYAADITYSTNNELGFDYLRDNMVLYKEQMVQRPLHYAVIDEVDSILIDEARTPLIISGQAAKSTKLYVQANAFVRTLKIEDDFTYDIKTKSVQLTESGMTKAEKAFGIENLFDVKHVALNHHIAQALKAHVAMQKDVDYVVEEGQVVIVDSFTGRLMKGRRYSEGLHQAIEAKEGLEVQNESMTLATITFQNYFRMYEKLSGMTGTAKTEEEEFRNIYNMQVVTIPTNQPVVRDDRPDLIYRTMEGKFKAVAEDVAQRYMTGQPVLVGTVAVETSELISKLLKNKGIPHQVLNAKNHEREAQIIEEAGQKGAVTIATNMAGRGTDIKLGEGVKELGGLAVIGTERHESRRIDNQLRGRSGRQGDPGITQFYLSMEDELMRRFGAERTMAMLDRFGMDDTTPIQSKMVSKAVESSQKRVEGNNFDSRKQLLQYDDVLRQQREVIYKQRFEVIDSDNLKSIVINMIQSSIERAVGSYTPKEELPEEWKLDGLVELINTNYLDEGAISVKDIYGKEADEITSFIMDRIKEKYDAKEETYGDEQMREFEKVIVLRAVDSKWMDHIDAMDQLRQGIHLRAYAQTNPLREYQMEGFAMFEHMVASIEDDVAKYVLKSEIQNNLEREEVVQGQTTAHQPQEGDEEKTVKKKPVRKVVDIGRNSPCHCGSGKKYKNCHGKTE.

Residues Q85, 103-107 (GEGKT), and D492 contribute to the ATP site. The tract at residues 788 to 841 (EVVQGQTTAHQPQEGDEEKTVKKKPVRKVVDIGRNSPCHCGSGKKYKNCHGKTE) is disordered. 4 residues coordinate Zn(2+): C825, C827, C836, and H837. Basic residues predominate over residues 829–841 (SGKKYKNCHGKTE).

Belongs to the SecA family. In terms of assembly, monomer and homodimer. Part of the essential Sec protein translocation apparatus which comprises SecA, SecYEG and auxiliary proteins SecDF. Other proteins may also be involved. Zn(2+) serves as cofactor.

The protein resides in the cell membrane. It is found in the cytoplasm. The catalysed reaction is ATP + H2O + cellular proteinSide 1 = ADP + phosphate + cellular proteinSide 2.. Functionally, part of the Sec protein translocase complex. Interacts with the SecYEG preprotein conducting channel. Has a central role in coupling the hydrolysis of ATP to the transfer of proteins into and across the cell membrane, serving as an ATP-driven molecular motor driving the stepwise translocation of polypeptide chains across the membrane. This chain is Protein translocase subunit SecA, found in Bacillus pumilus (strain SAFR-032).